A 349-amino-acid polypeptide reads, in one-letter code: Phosphate acetyltransferase (349 aa).

It belongs to the phosphate acetyltransferase and butyryltransferase family.

Its subcellular location is the cytoplasm. It carries out the reaction acetyl-CoA + phosphate = acetyl phosphate + CoA. The protein operates within metabolic intermediate biosynthesis; acetyl-CoA biosynthesis; acetyl-CoA from acetate: step 2/2. The chain is Phosphate acetyltransferase (pta) from Rickettsia typhi (strain ATCC VR-144 / Wilmington).